The following is a 185-amino-acid chain: Large ribosomal subunit protein uL5 (185 aa).

It belongs to the universal ribosomal protein uL5 family. In terms of assembly, part of the 50S ribosomal subunit; part of the 5S rRNA/L5/L18/L25 subcomplex. Contacts the 5S rRNA and the P site tRNA. Forms a bridge to the 30S subunit in the 70S ribosome.

In terms of biological role, this is one of the proteins that bind and probably mediate the attachment of the 5S RNA into the large ribosomal subunit, where it forms part of the central protuberance. In the 70S ribosome it contacts protein S13 of the 30S subunit (bridge B1b), connecting the 2 subunits; this bridge is implicated in subunit movement. Contacts the P site tRNA; the 5S rRNA and some of its associated proteins might help stabilize positioning of ribosome-bound tRNAs. This chain is Large ribosomal subunit protein uL5, found in Streptomyces griseus subsp. griseus (strain JCM 4626 / CBS 651.72 / NBRC 13350 / KCC S-0626 / ISP 5235).